Reading from the N-terminus, the 782-residue chain is Endonuclease MutS2 (782 aa).

336–343 (GPNTGGKT) contributes to the ATP binding site. One can recognise a Smr domain in the interval 707-782 (LDLRGYRYEE…GFGVTVAELK (76 aa)).

The protein belongs to the DNA mismatch repair MutS family. MutS2 subfamily. Homodimer. Binds to stalled ribosomes, contacting rRNA.

Endonuclease that is involved in the suppression of homologous recombination and thus may have a key role in the control of bacterial genetic diversity. Functionally, acts as a ribosome collision sensor, splitting the ribosome into its 2 subunits. Detects stalled/collided 70S ribosomes which it binds and splits by an ATP-hydrolysis driven conformational change. Acts upstream of the ribosome quality control system (RQC), a ribosome-associated complex that mediates the extraction of incompletely synthesized nascent chains from stalled ribosomes and their subsequent degradation. Probably generates substrates for RQC. The chain is Endonuclease MutS2 from Staphylococcus epidermidis (strain ATCC 12228 / FDA PCI 1200).